We begin with the raw amino-acid sequence, 210 residues long: Large ribosomal subunit protein uL4 (210 aa).

The interval 46 to 96 (QGNASTKTRAEVRGGGRKPWRQKGTGRARAGSNRSPLWRGGGVIFGPKPRD) is disordered. Positions 60–71 (GGRKPWRQKGTG) are enriched in basic residues.

It belongs to the universal ribosomal protein uL4 family. Part of the 50S ribosomal subunit.

One of the primary rRNA binding proteins, this protein initially binds near the 5'-end of the 23S rRNA. It is important during the early stages of 50S assembly. It makes multiple contacts with different domains of the 23S rRNA in the assembled 50S subunit and ribosome. Its function is as follows. Forms part of the polypeptide exit tunnel. The chain is Large ribosomal subunit protein uL4 from Gloeothece citriformis (strain PCC 7424) (Cyanothece sp. (strain PCC 7424)).